The chain runs to 62 residues: uncharacterized protein (62 aa).

This is an uncharacterized protein from Homo sapiens (Human).